The following is a 497-amino-acid chain: Cytochrome P450 CYP94D108 (497 aa).

The helical transmembrane segment at 6–26 (LLSLALLLLAAAAAAAFVLFP) threads the bilayer. Residue Cys439 participates in heme binding.

The protein belongs to the cytochrome P450 family. Mainly expressed in roots and, at low levels, in leaves, fruits and stems.

It localises to the membrane. The protein operates within steroid metabolism; cholesterol metabolism. Its function is as follows. Involved in the biosynthesis of spiroketal steroid and saponin natural products from cholesterol such as diosgenin and analogs (e.g. furostanol and spirostanol), plant defense compounds used as main precursors for the industrial production of steroid hormones. During the 5,6-spiroketalization of cholesterol, may catalyze the 27-monohydroxylation of furostanol-type steroid to an intermediate product that undergoes a stereospecific formation of the terminal heterocycle to yield diosgenin. The sequence is that of Cytochrome P450 CYP94D108 from Paris polyphylla (Daiswa polyphylla).